The following is a 206-amino-acid chain: Large ribosomal subunit protein uL4 (206 aa).

Residues A43–S78 form a disordered region. A compositionally biased stretch (basic and acidic residues) spans K49–H58. Residues T59–G70 show a composition bias toward basic residues.

It belongs to the universal ribosomal protein uL4 family. Part of the 50S ribosomal subunit.

Functionally, one of the primary rRNA binding proteins, this protein initially binds near the 5'-end of the 23S rRNA. It is important during the early stages of 50S assembly. It makes multiple contacts with different domains of the 23S rRNA in the assembled 50S subunit and ribosome. In terms of biological role, forms part of the polypeptide exit tunnel. The polypeptide is Large ribosomal subunit protein uL4 (Herminiimonas arsenicoxydans).